The following is a 367-amino-acid chain: Glutamate 5-kinase (367 aa).

Lys-10 contributes to the ATP binding site. Substrate is bound by residues Ser-50, Asp-137, and Asn-149. ATP-binding positions include 169 to 170 and 211 to 217; these read TD and TGGMATK. Residues 275-353 form the PUA domain; that stretch reads AGEITVDDGA…QQISEILGYE (79 aa).

It belongs to the glutamate 5-kinase family.

Its subcellular location is the cytoplasm. The catalysed reaction is L-glutamate + ATP = L-glutamyl 5-phosphate + ADP. It functions in the pathway amino-acid biosynthesis; L-proline biosynthesis; L-glutamate 5-semialdehyde from L-glutamate: step 1/2. Functionally, catalyzes the transfer of a phosphate group to glutamate to form L-glutamate 5-phosphate. In Yersinia enterocolitica serotype O:8 / biotype 1B (strain NCTC 13174 / 8081), this protein is Glutamate 5-kinase.